A 387-amino-acid polypeptide reads, in one-letter code: F-box only protein 4 (387 aa).

A phosphoserine mark is found at Ser-12 and Ser-48. The region spanning Ala-56–Phe-102 is the F-box domain.

Homodimer. Part of the SCF (SKP1-CUL1-F-box) E3 ubiquitin-protein ligase complex SCF(FBXO4) formed of CUL1, SKP1, RBX1 and FBXO4. Interacts with TERF1; this interaction is prevented in the presence of GNL3L. Identified in a complex with CRYAB and CCND1. In terms of processing, phosphorylation at Ser-12 varies during the cell cycle. It is low in resting cells and high in the S phase and the G2/M phase of the cell cycle. Phosphorylation is decreased during late G1 phase. Phosphorylation at Ser-12 promotes homodimerization and is necessary for optimal ubiquitin ligase activity towards CCND1.

It localises to the cytoplasm. It participates in protein modification; protein ubiquitination. Its function is as follows. Substrate recognition component of a SCF (SKP1-CUL1-F-box protein) E3 ubiquitin-protein ligase complex that mediates the ubiquitination and subsequent proteasomal degradation of target proteins. Promotes ubiquitination of cyclin-D1 (CCND1) and its subsequent proteasomal degradation. However, it does not act as a major regulator of CCND1 stability during the G1/S transition. Recognizes TERF1 and promotes its ubiquitination together with UBE2D1. Promotes ubiquitination of FXR1 following phosphorylation of FXR1 by GSK3B, leading to FXR1 degradation by the proteasome. This is F-box only protein 4 (FBXO4) from Homo sapiens (Human).